A 144-amino-acid chain; its full sequence is Large ribosomal subunit protein uL13 (144 aa).

The protein belongs to the universal ribosomal protein uL13 family. Part of the 50S ribosomal subunit.

This protein is one of the early assembly proteins of the 50S ribosomal subunit, although it is not seen to bind rRNA by itself. It is important during the early stages of 50S assembly. The sequence is that of Large ribosomal subunit protein uL13 from Desulfovibrio desulfuricans (strain ATCC 27774 / DSM 6949 / MB).